The primary structure comprises 372 residues: Maltose/maltodextrin import ATP-binding protein MalK (372 aa).

The ABC transporter domain maps to 4 to 234; that stretch reads VSLRNVGKSY…PANRFVAGFI (231 aa). 36–43 contributes to the ATP binding site; sequence GPSGCGKS.

The protein belongs to the ABC transporter superfamily. Maltooligosaccharide importer (TC 3.A.1.1.1) family. The complex is composed of two ATP-binding proteins (MalK), two transmembrane proteins (MalG and MalK) and a solute-binding protein (MalE).

It localises to the cell inner membrane. The catalysed reaction is D-maltose(out) + ATP + H2O = D-maltose(in) + ADP + phosphate + H(+). In terms of biological role, part of the ABC transporter complex MalEFGK involved in maltose/maltodextrin import. Responsible for energy coupling to the transport system. The protein is Maltose/maltodextrin import ATP-binding protein MalK of Mannheimia succiniciproducens (strain KCTC 0769BP / MBEL55E).